Consider the following 1247-residue polypeptide: Nidogen-1 (1247 aa).

An N-terminal signal peptide occupies residues 1–28 (MLASSSRIRAAWTRALLLPLLLAGPVGC). Residues 106–268 (PFLADLDTTD…GVWVFEIGSP (163 aa)) form the NIDO domain. Sulfotyrosine occurs at positions 289 and 296. The EGF-like 1 domain maps to 386-426 (SRQTCANNRHQCSVHAECRDYATGFCCSCVAGYTGNGRQCV). 19 cysteine pairs are disulfide-bonded: Cys390-Cys403, Cys397-Cys412, Cys411-Cys618, Cys414-Cys425, Cys672-Cys685, Cys679-Cys695, Cys697-Cys708, Cys714-Cys727, Cys721-Cys736, Cys738-Cys750, Cys762-Cys777, Cys769-Cys787, Cys789-Cys800, Cys806-Cys817, Cys811-Cys826, Cys828-Cys839, Cys849-Cys878, Cys889-Cys896, and Cys898-Cys919. The Nidogen G2 beta-barrel domain maps to 430 to 667 (SPQRVNGKVK…GPVREGSPDA (238 aa)). The region spanning 668 to 709 (LQNPCYIGTHGCDTNAACRPGPRTQFTCECSIGFRGDGRTCY) is the EGF-like 2 domain. Residues 702 to 704 (RGD) carry the Cell attachment site motif. In terms of domain architecture, EGF-like 3; calcium-binding spans 710–751 (DIDECSEQPSVCGSHTICNNHPGTFRCECVEGYQFSDEGTCV). The region spanning 758-801 (PINYCETGLHNCDIPQRAQCIYTGGSSYTCSCLPGFSGDGQACQ) is the EGF-like 4 domain. In terms of domain architecture, EGF-like 5; calcium-binding spans 802–840 (DVDECQPSRCHPDAFCYNTPGSFTCQCKPGYQGDGFRCV). The 74-residue stretch at 846 to 919 (KTRCQHEREH…RTRPGMTPPC (74 aa)) folds into the Thyroglobulin type-1 domain. O-linked (GalNAc...) threonine glycans are attached at residues Thr922 and Thr935. LDL-receptor class B repeat units follow at residues 990–1032 (KMVY…DHLG), 1033–1075 (RNIF…DSVR), 1076–1120 (GNLY…DAFS), and 1121–1162 (SQLC…YGKN). Residues 1208 to 1244 (GHNYCSVNNGGCTHLCLATPGSRTCRCPDNTLGVDCI) form the EGF-like 6 domain. 3 cysteine pairs are disulfide-bonded: Cys1212–Cys1223, Cys1219–Cys1232, and Cys1234–Cys1243.

In terms of assembly, interacts with FBLN1. Interacts with LGALS3BP. Interacts with PLXDC1. Interacts with SVEP1. Post-translationally, N- and O-glycosylated.

It localises to the secreted. It is found in the extracellular space. Its subcellular location is the extracellular matrix. The protein resides in the basement membrane. Its function is as follows. Sulfated glycoprotein widely distributed in basement membranes and tightly associated with laminin. Also binds to collagen IV and perlecan. It probably has a role in cell-extracellular matrix interactions. This Homo sapiens (Human) protein is Nidogen-1 (NID1).